Reading from the N-terminus, the 116-residue chain is S-adenosylmethionine decarboxylase proenzyme (116 aa).

Serine 63 (schiff-base intermediate with substrate; via pyruvic acid) is an active-site residue. Serine 63 is subject to Pyruvic acid (Ser); by autocatalysis. Residue histidine 68 is the Proton acceptor; for processing activity of the active site. Cysteine 83 serves as the catalytic Proton donor; for catalytic activity.

This sequence belongs to the prokaryotic AdoMetDC family. Type 1 subfamily. In terms of assembly, heterotetramer of two alpha and two beta chains arranged as a dimer of alpha/beta heterodimers. Pyruvate is required as a cofactor. Is synthesized initially as an inactive proenzyme. Formation of the active enzyme involves a self-maturation process in which the active site pyruvoyl group is generated from an internal serine residue via an autocatalytic post-translational modification. Two non-identical subunits are generated from the proenzyme in this reaction, and the pyruvate is formed at the N-terminus of the alpha chain, which is derived from the carboxyl end of the proenzyme. The post-translation cleavage follows an unusual pathway, termed non-hydrolytic serinolysis, in which the side chain hydroxyl group of the serine supplies its oxygen atom to form the C-terminus of the beta chain, while the remainder of the serine residue undergoes an oxidative deamination to produce ammonia and the pyruvoyl group blocking the N-terminus of the alpha chain.

It carries out the reaction S-adenosyl-L-methionine + H(+) = S-adenosyl 3-(methylsulfanyl)propylamine + CO2. Its pathway is amine and polyamine biosynthesis; S-adenosylmethioninamine biosynthesis; S-adenosylmethioninamine from S-adenosyl-L-methionine: step 1/1. Its function is as follows. Catalyzes the decarboxylation of S-adenosylmethionine to S-adenosylmethioninamine (dcAdoMet), the propylamine donor required for the synthesis of the polyamines spermine and spermidine from the diamine putrescine. This is S-adenosylmethionine decarboxylase proenzyme from Clostridium botulinum (strain 657 / Type Ba4).